The chain runs to 339 residues: MamK-like protein (339 aa).

ATP-binding positions include Tyr-18 to Ser-19, Asp-74, Ala-162 to Thr-164, and Lys-216 to Ala-220.

It belongs to the FtsA/MreB family. MamK subfamily. Forms cytoplasmic filament polymers. Forms filaments with MamK.

It is found in the cytoplasm. The protein resides in the cytoskeleton. The catalysed reaction is ATP + H2O = ADP + phosphate + H(+). In terms of biological role, protein with ATPase activity which forms pole-to-pole filaments in vivo, probably with MamK. Efficient filament formation requires MamK. Probably promotes turnover of MamK filaments, by providing a monomer pool. In vivo, in the absence of its paralog MamK, forms thin filaments from pole to pole. In vitro forms straight filaments and bundles in the absence of ATP. Filament formation is triggered by KCl and MgCl(2); polymerizes more slowly and makes thinner filaments than MamK. Expression in E.coli yields a filament in the cell's longitudinal axis; the protein nucleates at one pole or the cell septum. In Paramagnetospirillum magneticum (strain ATCC 700264 / AMB-1) (Magnetospirillum magneticum), this protein is MamK-like protein.